Reading from the N-terminus, the 346-residue chain is Anthranilate phosphoribosyltransferase (346 aa).

Residues G81, G84 to D85, N91 to T94, K109 to S117, and S121 each bind 5-phospho-alpha-D-ribose 1-diphosphate. G81 provides a ligand contact to anthranilate. S93 serves as a coordination point for Mg(2+). Position 167 (R167) interacts with anthranilate. 2 residues coordinate Mg(2+): D226 and E227.

Belongs to the anthranilate phosphoribosyltransferase family. As to quaternary structure, homodimer. Mg(2+) is required as a cofactor.

The catalysed reaction is N-(5-phospho-beta-D-ribosyl)anthranilate + diphosphate = 5-phospho-alpha-D-ribose 1-diphosphate + anthranilate. Its pathway is amino-acid biosynthesis; L-tryptophan biosynthesis; L-tryptophan from chorismate: step 2/5. Catalyzes the transfer of the phosphoribosyl group of 5-phosphorylribose-1-pyrophosphate (PRPP) to anthranilate to yield N-(5'-phosphoribosyl)-anthranilate (PRA). The sequence is that of Anthranilate phosphoribosyltransferase from Marinomonas sp. (strain MWYL1).